A 388-amino-acid polypeptide reads, in one-letter code: MNLHEYQAKKLFAEYGLPVSEGYACATPQEAAEAADKIGGTTWVVKCQVHAGGRGKAGGVKLAKSKDEIRAFAQNWLGKNLVTYQTDANGQPVTKILVESCTDIAKELYLGAVVDRGSRRVVFMASTEGGVDIEKIAHETPELIHKAAIDPLVGPQAYQARELAFKLGLVGDQIKQFTKIFMGLGQMFLDCDFALLEINPLVITAQGNLHCLDGKINIDANALYRQPKLREMHDPSQDDPREAHAAQWELNYVALDGNIGCMVNGAGLAMGTMDIVNLHGGSPANFLDVGGGATKERVTEAFKIILSDSKVQAVLVNIFGGIVRCDMIAEGIIGAVKEVGVKVPVVVRLEGNNAELGARKLADSGLNIIAATSLTDAAQQVVKAAEAK.

Positions 9 to 244 constitute an ATP-grasp domain; the sequence is KKLFAEYGLP…PSQDDPREAH (236 aa). ATP-binding positions include lysine 46, 53–55, glutamate 99, threonine 102, and glutamate 107; that span reads GRG. Residues asparagine 199 and aspartate 213 each coordinate Mg(2+). Residues asparagine 264 and 321–323 contribute to the substrate site; that span reads GIV.

It belongs to the succinate/malate CoA ligase beta subunit family. In terms of assembly, heterotetramer of two alpha and two beta subunits. The cofactor is Mg(2+).

The enzyme catalyses succinate + ATP + CoA = succinyl-CoA + ADP + phosphate. It carries out the reaction GTP + succinate + CoA = succinyl-CoA + GDP + phosphate. It functions in the pathway carbohydrate metabolism; tricarboxylic acid cycle; succinate from succinyl-CoA (ligase route): step 1/1. Its function is as follows. Succinyl-CoA synthetase functions in the citric acid cycle (TCA), coupling the hydrolysis of succinyl-CoA to the synthesis of either ATP or GTP and thus represents the only step of substrate-level phosphorylation in the TCA. The beta subunit provides nucleotide specificity of the enzyme and binds the substrate succinate, while the binding sites for coenzyme A and phosphate are found in the alpha subunit. The protein is Succinate--CoA ligase [ADP-forming] subunit beta of Aeromonas salmonicida (strain A449).